A 354-amino-acid chain; its full sequence is Polyprenal reductase 1 (354 aa).

6 consecutive transmembrane segments (helical) span residues 11–31 (PLLC…ALPI), 78–98 (FMHF…AIWF), 141–158 (YHVW…IQVL), 176–196 (MHIV…LSLA), 235–255 (PLLK…WGSL), and 301–321 (GMLV…VFVI).

Belongs to the steroid 5-alpha reductase family. Polyprenal reductase subfamily.

The protein resides in the cell membrane. The enzyme catalyses a di-trans,poly-cis-dolichal + NADP(+) = a di-trans,poly-cis-polyprenal + NADPH + H(+). It participates in protein modification; protein glycosylation. Its function is as follows. Plays a key role in early steps of protein N-linked glycosylation by being involved in the conversion of polyprenol into dolichol. Acts as a polyprenal reductase that mediates the reduction of polyprenal into dolichal in a NADP-dependent mechanism. Dolichols are required for the synthesis of dolichol-linked monosaccharides and the oligosaccharide precursor used for N-glycosylation. The protein is Polyprenal reductase 1 of Oryza sativa subsp. indica (Rice).